The chain runs to 624 residues: Kelch-like ECH-associated protein 1 (624 aa).

An S-(2-succinyl)cysteine modification is found at cysteine 38. A BTB domain is found at 77–149 (CDVTLQVKYE…AYTASISVGE (73 aa)). Arginine 135 participates in a covalent cross-link: N5-[4-(S-L-cysteinyl)-5-methyl-1H-imidazol-2-yl]-L-ornithine (Arg-Cys) (interchain with C-151 in KEAP1). Residues cysteine 151 and cysteine 241 each carry the S-(2-succinyl)cysteine modification. Cysteine 151 carries the post-translational modification S-(2,3-dicarboxypropyl)cysteine; alternate. An S-nitrosocysteine; alternate modification is found at cysteine 151. Residue cysteine 151 forms an N5-[4-(S-L-cysteinyl)-5-methyl-1H-imidazol-2-yl]-L-ornithine (Cys-Arg) (interchain with R-135 in KEAP1) linkage. A BACK domain is found at 184–286 (AIGIANFAEQ…TPRFLQTQLQ (103 aa)). Cysteine 257 and cysteine 273 each carry S-(2,3-dicarboxypropyl)cysteine. S-(2-succinyl)cysteine is present on residues cysteine 288 and cysteine 319. Position 288 is an S-(2,3-dicarboxypropyl)cysteine; alternate (cysteine 288). Kelch repeat units lie at residues 327–372 (LIYT…VVGG), 373–423 (LLYA…VIDG), 424–470 (HIYA…VLNR), 471–517 (LLYA…VLHS), 519–564 (IYAA…VHQG), and 565–611 (RIYV…VTME). The residue at position 434 (cysteine 434) is an S-cGMP-cysteine. Position 613 is an S-(2-succinyl)cysteine (cysteine 613).

This sequence belongs to the KEAP1 family. As to quaternary structure, component of the BCR(KEAP1) E3 ubiquitin ligase complex, at least composed of 2 molecules of CUL3, 2 molecules of KEAP1, and RBX1. Interacts with NFE2L2/NRF2; the interaction is direct. Forms a ternary complex with NFE2L2/NRF2 and PGAM5. Interacts with (phosphorylated) SQSTM1/p62; the interaction is direct and inactivates the BCR(KEAP1) complex by sequestering it in inclusion bodies, promoting its degradation. Interacts with NFE2L1. Interacts with BPTF and PTMA. Interacts with MAP1LC3B. Interacts indirectly with ENC1. Interacts with SESN1 and SESN2. Interacts with HSP90AA1 and HSP90AB1. Interacts with PGCKA1; this interaction prevents the ubiquitination of KEAP1 by TRIM25, thus protecting KEAP1 from degradation. In terms of processing, non-enzymatic covalent modifications of reactive cysteines by electrophile metabolites inactivate the BCR(KEAP1) complex. Accumulation of fumarate promotes the formation of cysteine S-succination (S-(2-succinyl)cysteine), leading to inactivate the BCR(KEAP1) complex and promote NFE2L2/NRF2 nuclear accumulation and activation. Nitric oxide-dependent 8-Nitro-cGMP formation promotes cysteine guanylation (S-cGMP-cysteine), leading to NFE2L2/NRF2 nuclear accumulation and activation. Itaconate, an anti-inflammatory metabolite generated in response to lipopolysaccharide, alkylates cysteines, activating NFE2L2/NRF2. Methylglyoxal, a reactive metabolite that accumulates when the glycolytic enzyme PGK1 is inhibited, promotes formation of a methylimidazole cross-link between proximal Cys-151 and Arg-135 on another KEAP1 molecule, resulting in an inactive dimer that inactivates the BCR(KEAP1) complex. Post-translationally, degraded via a proteasomal-independent process during selective autophagy: interaction with phosphorylated SQSTM1/p62 sequesters KEAP1 in inclusion bodies, leading to its degradation. Auto-ubiquitinated by the BCR(KEAP1) complex. Quinone-induced oxidative stress, but not sulforaphane, increases its ubiquitination. Ubiquitination and subsequent degradation is most pronounced following prolonged exposure of cells to oxidative stress, particularly in glutathione-deficient cells that are highly susceptible to oxidative stress. Deubiquitinated by USP25; leading to stabilization. Ubiquitinated by TRIM25; leading to degradation upon ER stress.

It is found in the cytoplasm. The protein localises to the nucleus. It functions in the pathway protein modification; protein ubiquitination. Its activity is regulated as follows. Ubiquitin ligase activity of the BCR(KEAP1) complex is inhibited by oxidative stress and electrophile metabolites such as sulforaphane. Electrophile metabolites react with reactive cysteine residues in KEAP1 and trigger non-enzymatic covalent modifications of these cysteine residues, leading to inactivate the ubiquitin ligase activity of the BCR(KEAP1) complex. Selective autophagy also inactivates the BCR(KEAP1) complex via interaction between KEAP1 and SQSTM1/p62, which sequesters the complex in inclusion bodies and promotes its degradation. Its function is as follows. Substrate-specific adapter of a BCR (BTB-CUL3-RBX1) E3 ubiquitin ligase complex that regulates the response to oxidative stress by targeting NFE2L2/NRF2 for ubiquitination. KEAP1 acts as a key sensor of oxidative and electrophilic stress: in normal conditions, the BCR(KEAP1) complex mediates ubiquitination and degradation of NFE2L2/NRF2, a transcription factor regulating expression of many cytoprotective genes. In response to oxidative stress, different electrophile metabolites trigger non-enzymatic covalent modifications of highly reactive cysteine residues in KEAP1, leading to inactivate the ubiquitin ligase activity of the BCR(KEAP1) complex, promoting NFE2L2/NRF2 nuclear accumulation and expression of phase II detoxifying enzymes. In response to selective autophagy, KEAP1 is sequestered in inclusion bodies following its interaction with SQSTM1/p62, leading to inactivation of the BCR(KEAP1) complex and activation of NFE2L2/NRF2. The BCR(KEAP1) complex also mediates ubiquitination of SQSTM1/p62, increasing SQSTM1/p62 sequestering activity and degradation. The BCR(KEAP1) complex also targets BPTF and PGAM5 for ubiquitination and degradation by the proteasome. In Rattus norvegicus (Rat), this protein is Kelch-like ECH-associated protein 1.